A 249-amino-acid chain; its full sequence is DNA repair protein RecO (249 aa).

This sequence belongs to the RecO family.

Functionally, involved in DNA repair and RecF pathway recombination. The chain is DNA repair protein RecO from Exiguobacterium sp. (strain ATCC BAA-1283 / AT1b).